Reading from the N-terminus, the 237-residue chain is Purine nucleoside phosphorylase DeoD-type (237 aa).

A purine D-ribonucleoside is bound at residue His4. Phosphate contacts are provided by residues Gly20, Arg24, Arg43, and Arg87 to Thr90. Residues Glu179–Glu181 and Ser203–Asp204 contribute to the a purine D-ribonucleoside site. The active-site Proton donor is Asp204.

Belongs to the PNP/UDP phosphorylase family. In terms of assembly, homohexamer; trimer of homodimers.

The catalysed reaction is a purine D-ribonucleoside + phosphate = a purine nucleobase + alpha-D-ribose 1-phosphate. It carries out the reaction a purine 2'-deoxy-D-ribonucleoside + phosphate = a purine nucleobase + 2-deoxy-alpha-D-ribose 1-phosphate. Functionally, catalyzes the reversible phosphorolytic breakdown of the N-glycosidic bond in the beta-(deoxy)ribonucleoside molecules, with the formation of the corresponding free purine bases and pentose-1-phosphate. In Clostridium beijerinckii (strain ATCC 51743 / NCIMB 8052) (Clostridium acetobutylicum), this protein is Purine nucleoside phosphorylase DeoD-type.